Consider the following 486-residue polypeptide: Lipase 1 (486 aa).

Residues Cys-58 and Cys-82 are joined by a disulfide bond. Ser-193 (acyl-ester intermediate) is an active-site residue. Asp-303 (charge relay system) is an active-site residue. A glycan (N-linked (GlcNAc...) asparagine) is linked at Asn-332. The active-site Charge relay system is His-392.

It belongs to the type-B carboxylesterase/lipase family.

The catalysed reaction is a triacylglycerol + H2O = a diacylglycerol + a fatty acid + H(+). This Yarrowia lipolytica (strain CLIB 122 / E 150) (Yeast) protein is Lipase 1 (LIP1).